The sequence spans 483 residues: Cytochrome P450 monooxygenase stcF (483 aa).

A heme-binding site is contributed by Cys-424.

Belongs to the cytochrome P450 family. It depends on heme as a cofactor.

It participates in mycotoxin biosynthesis; sterigmatocystin biosynthesis. Cytochrome P450 monooxygenase; part of the gene cluster that mediates the biosynthesis of sterigmatocystin (ST), a polyketide-derived furanocoumarin which is part of the most toxic and carcinogenic compounds among the known mycotoxins. The first step in the biosynthesis of sterigmatocystin is the production of hexanoate by the fatty acid synthase (FAS) units stcJ and stcK. The polyketide backbone is assembled by the non-reducing polyketide synthase stcA by condensation of the starter hexanoyl-CoA and 7 malonyl-CoA extender units followed by cyclization and release of norsolorinic acid. Norsolorinic acid is the first stable intermediate in the biosynthesis of sterigmatocystin and is converted into averantin (AVN) by the ketoreductase stcE which reduces the hexanoate ketone to an alcohol. Averantin is then oxidized into 5'-hydroxyaverantin (HAVN) by the cytochrome P450 monooxygenase stcF. 5'-hydroxyaverantin is further converted to 5'-oxyaverantin (OAVN) by the 5'-hydroxyaverantin dehydrogenase stcG. The next step is the conversion of OAVN into averufin (AVF) which is catalyzed by a yet to be identified enzyme. The cytochrome P450 monooxygenase stcB and the flavin-binding monooxygenase stcW are both required for the conversion of averufin to 1-hydroxyversicolorone. The esterase stcI probably catalyzes the formation of versiconal hemiacetal acetate from 1-hydroxyversicolorone. The oxydoreductase stcN then probably catalyzes the biosynthetic step from versiconal to versicolorin B (VERB). The next step is performed by the versicolorin B desaturase stcL to produce versicolorin A (VERA). The ketoreductase stcU and the cytochrome P450 monooxygenase stcS are involved in the conversion of versicolorin A to demethylsterigmatocystin. The Baeyer-Villiger oxidas stcQ and the reductase stcR might be involved in the biosynthetic step from versicolorin A to demethylsterigmatocystin. The final step in the biosynthesis of sterigmatocystin is the methylation of demethylsterigmatocystin catalyzed by the methyltransferase stcP. In Emericella nidulans (strain FGSC A4 / ATCC 38163 / CBS 112.46 / NRRL 194 / M139) (Aspergillus nidulans), this protein is Cytochrome P450 monooxygenase stcF.